Consider the following 426-residue polypeptide: 5-methylthioadenosine/S-adenosylhomocysteine deaminase (426 aa).

Residues H60 and H62 each coordinate Zn(2+). 2 residues coordinate substrate: E89 and H179. H206 serves as a coordination point for Zn(2+). Residues E209 and D294 each coordinate substrate. D294 contacts Zn(2+).

This sequence belongs to the metallo-dependent hydrolases superfamily. MTA/SAH deaminase family. Zn(2+) serves as cofactor.

It carries out the reaction S-adenosyl-L-homocysteine + H2O + H(+) = S-inosyl-L-homocysteine + NH4(+). The enzyme catalyses S-methyl-5'-thioadenosine + H2O + H(+) = S-methyl-5'-thioinosine + NH4(+). Functionally, catalyzes the deamination of 5-methylthioadenosine and S-adenosyl-L-homocysteine into 5-methylthioinosine and S-inosyl-L-homocysteine, respectively. Is also able to deaminate adenosine. The polypeptide is 5-methylthioadenosine/S-adenosylhomocysteine deaminase (Dictyoglomus thermophilum (strain ATCC 35947 / DSM 3960 / H-6-12)).